A 275-amino-acid chain; its full sequence is Alpha carbonic anhydrase 7 (275 aa).

An N-terminal signal peptide occupies residues 1-27; it reads MVNYSSISCIFFVALFSIFTIVSISSA. Residues Asn-3 and Asn-96 are each glycosylated (N-linked (GlcNAc...) asparagine). Residues 38-272 form the Alpha-carbonic anhydrase domain; sequence REFNYKKNDE…TNKRIVHLYR (235 aa). Residues Cys-63 and Cys-222 are joined by a disulfide bond. Catalysis depends on His-104, which acts as the Proton acceptor. Positions 130, 132, and 149 each coordinate Zn(2+). 218–219 lines the substrate pocket; that stretch reads TT. An N-linked (GlcNAc...) asparagine glycan is attached at Asn-225.

It belongs to the alpha-class carbonic anhydrase family. Zn(2+) is required as a cofactor. N-glycosylated.

It is found in the plastid. It localises to the chloroplast stroma. It carries out the reaction hydrogencarbonate + H(+) = CO2 + H2O. In terms of biological role, reversible hydration of carbon dioxide. The chain is Alpha carbonic anhydrase 7 (ACA7) from Arabidopsis thaliana (Mouse-ear cress).